The following is a 276-amino-acid chain: Radial spoke head protein 9 homolog (276 aa).

Belongs to the flagellar radial spoke RSP9 family. As to quaternary structure, component of the axonemal radial spoke 1 (RS1) and 2 (RS2) complexes, at least composed of spoke head proteins RSPH1, RSPH3, RSPH9 and the cilia-specific component RSPH4A or sperm-specific component RSPH6A, spoke stalk proteins RSPH14, DNAJB13, DYDC1, ROPN1L and NME5, and the RS1 complex-specific anchor protein IQUB. Interacts with IQUB. Interacts with RSPH3B. Interacts with RSPH4A. Interacts with RSPH6A. Interacts with CFAP61. Interacts with LRRC23.

The protein resides in the cytoplasm. It is found in the cytoskeleton. Its subcellular location is the cilium axoneme. It localises to the flagellum axoneme. The protein localises to the cell projection. The protein resides in the kinocilium. Functions as part of axonemal radial spoke complexes that play an important part in the motility of sperm and cilia. Essential for both the radial spoke head assembly and the central pair microtubule stability in ependymal motile cilia. Required for motility of olfactory and neural cilia and for the structural integrity of ciliary axonemes in both 9+0 and 9+2 motile cilia. This Bos taurus (Bovine) protein is Radial spoke head protein 9 homolog (RSPH9).